The primary structure comprises 351 residues: Dihydroorotate dehydrogenase (quinone) (351 aa).

Residues 67–71 (AGFDK) and T91 contribute to the FMN site. K71 contributes to the substrate binding site. 116–120 (NAMGF) is a substrate binding site. Positions 145 and 178 each coordinate FMN. N178 serves as a coordination point for substrate. Catalysis depends on S181, which acts as the Nucleophile. N183 is a binding site for substrate. FMN is bound by residues K214 and T242. Residue 243 to 244 (NT) coordinates substrate. Residues G262, G291, and 312–313 (YS) contribute to the FMN site.

This sequence belongs to the dihydroorotate dehydrogenase family. Type 2 subfamily. In terms of assembly, monomer. The cofactor is FMN.

Its subcellular location is the cell membrane. The catalysed reaction is (S)-dihydroorotate + a quinone = orotate + a quinol. Its pathway is pyrimidine metabolism; UMP biosynthesis via de novo pathway; orotate from (S)-dihydroorotate (quinone route): step 1/1. Its function is as follows. Catalyzes the conversion of dihydroorotate to orotate with quinone as electron acceptor. The protein is Dihydroorotate dehydrogenase (quinone) (pyrD) of Helicobacter pylori (strain ATCC 700392 / 26695) (Campylobacter pylori).